Reading from the N-terminus, the 206-residue chain is Translocation protein SEC66 (206 aa).

Residues 1–27 (MSEFNETKFSNNGTFFETEEPIVETKS) lie on the Lumenal side of the membrane. N-linked (GlcNAc...) asparagine glycosylation is found at Asn5 and Asn12. The helical; Signal-anchor for type II membrane protein transmembrane segment at 28 to 48 (ISVYTPLIYVFILVVSLVMFA) threads the bilayer. Over 49–206 (SSYRKKQAKK…KINNDGRLVN (158 aa)) the chain is Cytoplasmic.

This sequence to S.pombe SpBC409.21. Component of the heterotetrameric Sec62/63complex composed of SEC62, SEC63, SEC66 and SEC72. The Sec62/63 complex associates with the Sec61 complex to form the Sec complex. Part of a complex consisting of KAR2, SEC63, SEC66 and SEC72.

It localises to the endoplasmic reticulum membrane. In terms of biological role, acts as a component of the Sec62/63 complex which is involved in SRP-independent post-translational translocation across the endoplasmic reticulum (ER) and functions together with the Sec61 complex and KAR2 in a channel-forming translocon complex. A cycle of assembly and disassembly of Sec62/63 complex from SEC61 may govern the activity of the translocon. SEC66 is required to attach or retain SEC72 in the SEC63 complex. It is essential for growth at elevated temperatures. The protein is Translocation protein SEC66 (SEC66) of Saccharomyces cerevisiae (strain ATCC 204508 / S288c) (Baker's yeast).